We begin with the raw amino-acid sequence, 176 residues long: Protein GrpE (176 aa).

This sequence belongs to the GrpE family. As to quaternary structure, homodimer.

It localises to the cytoplasm. Its function is as follows. Participates actively in the response to hyperosmotic and heat shock by preventing the aggregation of stress-denatured proteins, in association with DnaK and GrpE. It is the nucleotide exchange factor for DnaK and may function as a thermosensor. Unfolded proteins bind initially to DnaJ; upon interaction with the DnaJ-bound protein, DnaK hydrolyzes its bound ATP, resulting in the formation of a stable complex. GrpE releases ADP from DnaK; ATP binding to DnaK triggers the release of the substrate protein, thus completing the reaction cycle. Several rounds of ATP-dependent interactions between DnaJ, DnaK and GrpE are required for fully efficient folding. This is Protein GrpE from Meiothermus ruber.